Reading from the N-terminus, the 301-residue chain is Large ribosomal subunit protein uL18 (301 aa).

Belongs to the universal ribosomal protein uL18 family. In terms of assembly, component of the large ribosomal subunit (LSU). Mature N.crassa ribosomes consist of a small (40S) and a large (60S) subunit. The 40S small subunit contains 1 molecule of ribosomal RNA (18S rRNA) and at least 32 different proteins. The large 60S subunit contains 3 rRNA molecules (26S, 5.8S and 5S rRNA) and at least 42 different proteins.

It localises to the cytoplasm. Its function is as follows. Component of the ribosome, a large ribonucleoprotein complex responsible for the synthesis of proteins in the cell. The small ribosomal subunit (SSU) binds messenger RNAs (mRNAs) and translates the encoded message by selecting cognate aminoacyl-transfer RNA (tRNA) molecules. The large subunit (LSU) contains the ribosomal catalytic site termed the peptidyl transferase center (PTC), which catalyzes the formation of peptide bonds, thereby polymerizing the amino acids delivered by tRNAs into a polypeptide chain. The nascent polypeptides leave the ribosome through a tunnel in the LSU and interact with protein factors that function in enzymatic processing, targeting, and the membrane insertion of nascent chains at the exit of the ribosomal tunnel. The polypeptide is Large ribosomal subunit protein uL18 (rpl-5) (Neurospora crassa (strain ATCC 24698 / 74-OR23-1A / CBS 708.71 / DSM 1257 / FGSC 987)).